The chain runs to 380 residues: Cytochrome b (380 aa).

The next 4 helical transmembrane spans lie at 34–54, 78–99, 114–134, and 179–199; these read FGSL…LLAT, WLIR…YLHI, WNTG…GYVL, and FFAL…IHLT. Positions 84 and 98 each coordinate heme b. Residues His183 and His197 each coordinate heme b. Residue His202 coordinates a ubiquinone. Helical transmembrane passes span 227–247, 289–309, 321–341, and 348–368; these read LKDI…ALFS, LGGV…PLLH, LSQL…WVGS, and FIII…ILFP.

It belongs to the cytochrome b family. The cytochrome bc1 complex contains 11 subunits: 3 respiratory subunits (MT-CYB, CYC1 and UQCRFS1), 2 core proteins (UQCRC1 and UQCRC2) and 6 low-molecular weight proteins (UQCRH/QCR6, UQCRB/QCR7, UQCRQ/QCR8, UQCR10/QCR9, UQCR11/QCR10 and a cleavage product of UQCRFS1). This cytochrome bc1 complex then forms a dimer. It depends on heme b as a cofactor.

Its subcellular location is the mitochondrion inner membrane. Functionally, component of the ubiquinol-cytochrome c reductase complex (complex III or cytochrome b-c1 complex) that is part of the mitochondrial respiratory chain. The b-c1 complex mediates electron transfer from ubiquinol to cytochrome c. Contributes to the generation of a proton gradient across the mitochondrial membrane that is then used for ATP synthesis. This Ciconia ciconia (White stork) protein is Cytochrome b (MT-CYB).